The sequence spans 160 residues: UPF0262 protein BCAN_A0255 (160 aa).

Belongs to the UPF0262 family.

The polypeptide is UPF0262 protein BCAN_A0255 (Brucella canis (strain ATCC 23365 / NCTC 10854 / RM-666)).